We begin with the raw amino-acid sequence, 200 residues long: MKYLHTICLLFIFVARGNSRSCDFCHNIGKDCDGYEEECSSPEDVCGKVLLEISSASLSVRTVHKNCFSSSICKLGQFDVNIGHHSYIRGRINCCEKELCEDQPFPGLPLSKPNGYYCPGAIGLFTKDSTEYEAICKGTETKCINIVGHRYEQFPGDISYNLKGCVSSCPLLSLSNATFEQNRNYLEKVECKDAIRLASL.

The N-terminal stretch at 1–19 is a signal peptide; the sequence is MKYLHTICLLFIFVARGNS. Cystine bridges form between cysteine 22–cysteine 46, cysteine 25–cysteine 32, cysteine 39–cysteine 67, cysteine 73–cysteine 94, cysteine 95–cysteine 100, cysteine 118–cysteine 143, cysteine 136–cysteine 165, and cysteine 169–cysteine 191. N-linked (GlcNAc...) asparagine; partial glycosylation is present at asparagine 176.

As to quaternary structure, occurs as a mixture of oligomers. Tetrameric arrangement appears to be the predominant quaternary structure. Interacts with phospholipase A2 crotoxin basic subunit CBd; the interaction leads to dissociation of the CA-CB heterodimer and to inhibition of PLA2 activity of the CB subunit. Post-translationally, the carbohydrate moiety increases the inhibition capacity of CNF, but is not essential for activity and for oligomerization. Expressed by the liver.

The protein resides in the secreted. Functionally, inhibits the PLA2 activity of crotoxin (CTX) by replacing the acid subunit (CA) in the CTX complex. Displays a pro-inflammatory action through activation of important main signaling pathways for human leukocytes, in vitro. Abolishes both the muscle-paralyzing and muscle-damaging activities of CTX in mice phrenic nerve-diaphragm muscle preparations. This is Phospholipase A2 inhibitor CNF from Crotalus durissus terrificus (South American rattlesnake).